A 148-amino-acid polypeptide reads, in one-letter code: MSIIDNRKAHFDYHIEERYEAGLVLEGWEVKALRAGRGQIKEGYVVVKNAEIFLIGTHISPLPEASTHIHPDPVRTRKLLLHREEIKKLIGKVEQRGYTLVPLNFHYKGGRVKCDIALAKGKKLHDKRETEKKRHWEREKARIMRAGT.

Belongs to the SmpB family.

The protein resides in the cytoplasm. Its function is as follows. Required for rescue of stalled ribosomes mediated by trans-translation. Binds to transfer-messenger RNA (tmRNA), required for stable association of tmRNA with ribosomes. tmRNA and SmpB together mimic tRNA shape, replacing the anticodon stem-loop with SmpB. tmRNA is encoded by the ssrA gene; the 2 termini fold to resemble tRNA(Ala) and it encodes a 'tag peptide', a short internal open reading frame. During trans-translation Ala-aminoacylated tmRNA acts like a tRNA, entering the A-site of stalled ribosomes, displacing the stalled mRNA. The ribosome then switches to translate the ORF on the tmRNA; the nascent peptide is terminated with the 'tag peptide' encoded by the tmRNA and targeted for degradation. The ribosome is freed to recommence translation, which seems to be the essential function of trans-translation. In Burkholderia ambifaria (strain ATCC BAA-244 / DSM 16087 / CCUG 44356 / LMG 19182 / AMMD) (Burkholderia cepacia (strain AMMD)), this protein is SsrA-binding protein.